Here is a 602-residue protein sequence, read N- to C-terminus: Proteasome-associated ATPase (602 aa).

Residues 13 to 89 (PDAAEVERLR…LREEVDRLGQ (77 aa)) adopt a coiled-coil conformation. 289–294 (GCGKTL) provides a ligand contact to ATP. Residues 601–602 (YL) are docks into pockets in the proteasome alpha-ring.

Belongs to the AAA ATPase family. As to quaternary structure, homohexamer. Assembles into a hexameric ring structure that caps the 20S proteasome core. Strongly interacts with the prokaryotic ubiquitin-like protein Pup through a hydrophobic interface; the interacting region of ARC lies in its N-terminal coiled-coil domain. There is one Pup binding site per ARC hexamer ring. Upon ATP-binding, the C-terminus of ARC interacts with the alpha-rings of the proteasome core, possibly by binding to the intersubunit pockets.

It functions in the pathway protein degradation; proteasomal Pup-dependent pathway. Functionally, ATPase which is responsible for recognizing, binding, unfolding and translocation of pupylated proteins into the bacterial 20S proteasome core particle. May be essential for opening the gate of the 20S proteasome via an interaction with its C-terminus, thereby allowing substrate entry and access to the site of proteolysis. Thus, the C-termini of the proteasomal ATPase may function like a 'key in a lock' to induce gate opening and therefore regulate proteolysis. The sequence is that of Proteasome-associated ATPase from Mycobacteroides abscessus (strain ATCC 19977 / DSM 44196 / CCUG 20993 / CIP 104536 / JCM 13569 / NCTC 13031 / TMC 1543 / L948) (Mycobacterium abscessus).